We begin with the raw amino-acid sequence, 2090 residues long: Nuclear pore complex protein Nup205 (2090 aa).

The protein belongs to the NUP186/NUP192/NUP205 family. Part of the nuclear pore complex (NPC).

The protein localises to the nucleus. It is found in the nuclear pore complex. Plays a role in the nuclear pore complex (NPC) assembly and maintenance, but with limited role in NPC permeability. Required for specific nuclear import pathways such as Mad import. The chain is Nuclear pore complex protein Nup205 from Drosophila melanogaster (Fruit fly).